The chain runs to 256 residues: Venom allergen-1 (256 aa).

Residues 1-21 form the signal peptide; it reads MAFNGIALLITATIFIGSCYA. In terms of domain architecture, SCP spans 65-211; sequence LNTHNKLRAE…MINYYLVCNY (147 aa). N-linked (GlcNAc...) asparagine glycans are attached at residues asparagine 146 and asparagine 210.

Belongs to the CRISP family.

The protein localises to the secreted. Activates autophagy in human monocytic cells, dendritic cells and macrophages. Functionally, (Microbial infection) Promotes Zika virus replication in human dendritic cells and macrophages. Facilitates Zika virus transmission from infected mosquitoes to the host in mouse model. The polypeptide is Venom allergen-1 (Aedes albopictus (Asian tiger mosquito)).